The chain runs to 145 residues: D-aminoacyl-tRNA deacylase (145 aa).

A Gly-cisPro motif, important for rejection of L-amino acids motif is present at residues 137-138 (GP).

This sequence belongs to the DTD family. In terms of assembly, homodimer.

It is found in the cytoplasm. It catalyses the reaction glycyl-tRNA(Ala) + H2O = tRNA(Ala) + glycine + H(+). The enzyme catalyses a D-aminoacyl-tRNA + H2O = a tRNA + a D-alpha-amino acid + H(+). Functionally, an aminoacyl-tRNA editing enzyme that deacylates mischarged D-aminoacyl-tRNAs. Also deacylates mischarged glycyl-tRNA(Ala), protecting cells against glycine mischarging by AlaRS. Acts via tRNA-based rather than protein-based catalysis; rejects L-amino acids rather than detecting D-amino acids in the active site. By recycling D-aminoacyl-tRNA to D-amino acids and free tRNA molecules, this enzyme counteracts the toxicity associated with the formation of D-aminoacyl-tRNA entities in vivo and helps enforce protein L-homochirality. The protein is D-aminoacyl-tRNA deacylase of Azotobacter vinelandii (strain DJ / ATCC BAA-1303).